A 275-amino-acid polypeptide reads, in one-letter code: Large ribosomal subunit protein uL2 (275 aa).

Residues 222–275 (GVAMNPVDHPMGGGEGRSSGGRHPCSPWGMPTKGYKTRKNKTTDKFIVRKRNKR) are disordered.

The protein belongs to the universal ribosomal protein uL2 family. As to quaternary structure, part of the 50S ribosomal subunit. Forms a bridge to the 30S subunit in the 70S ribosome.

Functionally, one of the primary rRNA binding proteins. Required for association of the 30S and 50S subunits to form the 70S ribosome, for tRNA binding and peptide bond formation. It has been suggested to have peptidyltransferase activity; this is somewhat controversial. Makes several contacts with the 16S rRNA in the 70S ribosome. The chain is Large ribosomal subunit protein uL2 from Desulfatibacillum aliphaticivorans.